The following is a 643-amino-acid chain: tRNA 5-methylaminomethyl-2-thiouridine biosynthesis bifunctional protein MnmC (643 aa).

Positions 1–223 are tRNA (mnm(5)s(2)U34)-methyltransferase; sequence MPDRLVSATL…VDDRLVGDYA (223 aa). Residues 247-643 are FAD-dependent cmnm(5)s(2)U34 oxidoreductase; the sequence is IGAGLAGCAV…LRARRVGSAG (397 aa).

It in the N-terminal section; belongs to the methyltransferase superfamily. tRNA (mnm(5)s(2)U34)-methyltransferase family. In the C-terminal section; belongs to the DAO family. FAD serves as cofactor.

It is found in the cytoplasm. It carries out the reaction 5-aminomethyl-2-thiouridine(34) in tRNA + S-adenosyl-L-methionine = 5-methylaminomethyl-2-thiouridine(34) in tRNA + S-adenosyl-L-homocysteine + H(+). Functionally, catalyzes the last two steps in the biosynthesis of 5-methylaminomethyl-2-thiouridine (mnm(5)s(2)U) at the wobble position (U34) in tRNA. Catalyzes the FAD-dependent demodification of cmnm(5)s(2)U34 to nm(5)s(2)U34, followed by the transfer of a methyl group from S-adenosyl-L-methionine to nm(5)s(2)U34, to form mnm(5)s(2)U34. This Burkholderia cenocepacia (strain HI2424) protein is tRNA 5-methylaminomethyl-2-thiouridine biosynthesis bifunctional protein MnmC.